A 378-amino-acid chain; its full sequence is Monomethylxanthine methyltransferase 1 (378 aa).

Residues Tyr-18, Cys-61, Asn-66, Asp-100, Leu-101, Ser-139, Phe-140, and Cys-156 each coordinate S-adenosyl-L-homocysteine. Theobromine-binding residues include Tyr-157, His-160, and Trp-161. Asn-178, Asp-260, Phe-262, and Asn-263 together coordinate Mg(2+). Theobromine is bound at residue Tyr-362.

The protein belongs to the methyltransferase superfamily. Type-7 methyltransferase family. Mg(2+) is required as a cofactor. Expressed, at low levels, in stems, young leaves, floral buds and immature fruits (grains), but not in roots, old leaves and mature fruits.

It localises to the cytoplasm. It carries out the reaction 7-methylxanthine + S-adenosyl-L-methionine = theobromine + S-adenosyl-L-homocysteine + H(+). The protein operates within alkaloid biosynthesis. In terms of biological role, involved in the biosynthesis of caffeine. Catalyzes the conversion of 7-methylxanthine (7mX) to theobromine and of paraxanthine to caffeine. Has a 5-fold preference for 7mX. The chain is Monomethylxanthine methyltransferase 1 from Coffea arabica (Arabian coffee).